The sequence spans 944 residues: Isoleucine--tRNA ligase (944 aa).

Residues 58–68 (PYANGQIHIGH) carry the 'HIGH' region motif. Glu568 provides a ligand contact to L-isoleucyl-5'-AMP. A 'KMSKS' region motif is present at residues 609–613 (KMSKS). Lys612 contributes to the ATP binding site. Cys907, Cys910, Cys927, and Cys930 together coordinate Zn(2+).

The protein belongs to the class-I aminoacyl-tRNA synthetase family. IleS type 1 subfamily. As to quaternary structure, monomer. It depends on Zn(2+) as a cofactor.

It is found in the cytoplasm. It catalyses the reaction tRNA(Ile) + L-isoleucine + ATP = L-isoleucyl-tRNA(Ile) + AMP + diphosphate. In terms of biological role, catalyzes the attachment of isoleucine to tRNA(Ile). As IleRS can inadvertently accommodate and process structurally similar amino acids such as valine, to avoid such errors it has two additional distinct tRNA(Ile)-dependent editing activities. One activity is designated as 'pretransfer' editing and involves the hydrolysis of activated Val-AMP. The other activity is designated 'posttransfer' editing and involves deacylation of mischarged Val-tRNA(Ile). The chain is Isoleucine--tRNA ligase from Idiomarina loihiensis (strain ATCC BAA-735 / DSM 15497 / L2-TR).